The primary structure comprises 1251 residues: Botulinum neurotoxin type E (1251 aa).

His212 lines the Zn(2+) pocket. Glu213 is an active-site residue. 2 residues coordinate Zn(2+): His216 and Glu251. Cys412 and Cys426 are disulfide-bonded. The interval 423 to 819 is translocation domain (TD); the sequence is KSICIEINNG…ELNSMVIDTL (397 aa). Residues 466–515 are belt; it reads NDLDQVILNFNSESAPGLSDEKLNLTIQNDAYIPKYDSNGTSDIEQHDVN. The N-terminus of receptor binding domain (N-RBD) stretch occupies residues 845–1067; sequence KRIKSSSVLN…EIQTLYNNEP (223 aa). A C-terminus of receptor binding domain (C-RBD) region spans residues 1068–1251; it reads NANILKDFWG…ISEEHGWQEK (184 aa). The Host ganglioside-binding motif motif lies at 1221 to 1224; it reads STWY.

It belongs to the peptidase M27 family. Heterodimer; disulfide-linked heterodimer of a light chain (LC) and a heavy chain (HC). The LC has the proteolytic/pharmacological activity, while the N- and C-terminal of the HC mediate channel formation and toxin binding, respectively. Interacts with host synaptic vesicle glycoproteins SV2A and SV2B which probably serve as coreceptors. Requires Zn(2+) as cofactor.

It localises to the secreted. The protein localises to the host cytoplasm. Its subcellular location is the host cytosol. It is found in the host synapse. The protein resides in the host presynaptic cell membrane. It localises to the host cytoplasmic vesicle. The protein localises to the host secretory vesicle. Its subcellular location is the host synaptic vesicle membrane. The catalysed reaction is Limited hydrolysis of proteins of the neuroexocytosis apparatus, synaptobrevins, SNAP25 or syntaxin. No detected action on small molecule substrates.. Functionally, botulinum toxin causes flaccid paralysis by inhibiting neurotransmitter (acetylcholine) release from the presynaptic membranes of nerve terminals of eukaryotic host skeletal and autonomic nervous system, with frequent heart or respiratory failure. Precursor of botulinum neurotoxin E which has 2 coreceptors; complex polysialylated gangliosides found on neural tissue and specific membrane-anchored proteins found in synaptic vesicles. Receptor proteins are exposed on host presynaptic cell membrane during neurotransmitter release, when the toxin heavy chain (HC) binds to them. Upon synaptic vesicle recycling the toxin is taken up via the endocytic pathway. When the pH of the toxin-containing endosome drops a structural rearrangement occurs so that the N-terminus of the HC forms pores that allows the light chain (LC) to translocate into the cytosol. Once in the cytosol the disulfide bond linking the 2 subunits is reduced and LC cleaves its target protein on synaptic vesicles, preventing their fusion with the cytoplasmic membrane and thus neurotransmitter release. Its function is as follows. Has proteolytic activity. After translocation into the eukaryotic host cytosol, LC hydrolyzes the '180-Arg-|-Ile-181' bond in SNAP25, blocking neurotransmitter release. Responsible for host epithelial cell transcytosis, host nerve cell targeting and translocation of light chain (LC) into host cytosol. Composed of 3 subdomains; the translocation domain (TD), and N-terminus and C-terminus of the receptor-binding domain (RBD). The RBD is responsible for the adherence of the toxin to the cell surface. It simultaneously recognizes 2 coreceptors; host polysialated gangliosides and the receptor proteins SV2A and SV2B in close proximity on host synaptic vesicles. Interaction with SV2 proteins requires SV2 glycosylation. The N-terminus of the TD wraps an extended belt around the perimeter of the LC, protecting Zn(2+) in the active site; it may also prevent premature LC dissociation from the translocation channel and protect toxin prior to translocation. The TD inserts into synaptic vesicle membrane to allow translocation into the host cytosol. Binds ganglioside GD1a in vitro. The chain is Botulinum neurotoxin type E from Clostridium butyricum.